The chain runs to 496 residues: Probable cytosol aminopeptidase (496 aa).

Lysine 266 and aspartate 271 together coordinate Mn(2+). Lysine 278 is an active-site residue. 3 residues coordinate Mn(2+): aspartate 289, aspartate 348, and glutamate 350. Arginine 352 is an active-site residue.

This sequence belongs to the peptidase M17 family. Mn(2+) serves as cofactor.

Its subcellular location is the cytoplasm. It catalyses the reaction Release of an N-terminal amino acid, Xaa-|-Yaa-, in which Xaa is preferably Leu, but may be other amino acids including Pro although not Arg or Lys, and Yaa may be Pro. Amino acid amides and methyl esters are also readily hydrolyzed, but rates on arylamides are exceedingly low.. The enzyme catalyses Release of an N-terminal amino acid, preferentially leucine, but not glutamic or aspartic acids.. In terms of biological role, presumably involved in the processing and regular turnover of intracellular proteins. Catalyzes the removal of unsubstituted N-terminal amino acids from various peptides. The sequence is that of Probable cytosol aminopeptidase from Azotobacter vinelandii (strain DJ / ATCC BAA-1303).